Here is a 630-residue protein sequence, read N- to C-terminus: Putative adenylate cyclase regulatory protein (630 aa).

The segment at 10 to 46 (CAVCREPWAEGALELFPCRHVFCTVCVVERWRCPSCQ) adopts an RING-type zinc-finger fold. 18 LRR repeats span residues 184–206 (FLVH…CRLK), 207–230 (TLEA…CALP), 231–251 (QLTS…RCIH), 255–277 (KLKV…GGMR), 278–301 (SLEK…CKFS), 302–324 (NLRE…KNLI), 325–347 (NLKV…ERLV), 348–370 (NLDK…ANLS), 371–393 (NLKE…QDLN), 394–416 (NLEV…KNLS), 417–439 (KMRE…ETLK), 440–462 (GLEE…WSLH), 463–485 (HLRV…EGIT), 486–508 (GLEE…WNLR), 509–531 (NVCV…QCLT), 532–554 (GLEE…GNLR), 555–577 (NLKC…DRLV), and 578–599 (NLEK…MELM).

Functionally, may interact with adenylate cyclase to regulate its activity. May be involved in the postranscriptional regulation of genes in VSG expression sites. In Trypanosoma equiperdum, this protein is Putative adenylate cyclase regulatory protein (ESAG8C).